The chain runs to 98 residues: uncharacterized protein (98 aa).

2 helical membrane passes run 2–22 and 70–90; these read IVTL…GLWW and AAKA…LPIL.

The protein localises to the cell membrane. This is an uncharacterized protein from Sinorhizobium fredii (strain NBRC 101917 / NGR234).